A 599-amino-acid polypeptide reads, in one-letter code: Beta-myrcene synthase, chloroplastic (599 aa).

The N-terminal 34 residues, 1–34, are a transit peptide targeting the chloroplast; it reads MWSTISISMNVAILKKPLNFLHNSNNKASNPRCV. Residues aspartate 352, aspartate 356, aspartate 496, threonine 500, and glutamate 504 each coordinate Mg(2+). A DDXXD motif motif is present at residues 352-356; sequence DDVYD.

Belongs to the terpene synthase family. It depends on Mg(2+) as a cofactor. Mn(2+) serves as cofactor.

The protein localises to the plastid. The protein resides in the chloroplast. The enzyme catalyses (2E)-geranyl diphosphate = beta-myrcene + diphosphate. It functions in the pathway secondary metabolite biosynthesis; terpenoid biosynthesis. Functionally, monoterpene synthase that catalyzes the formation of beta-myrcene from geranyl diphosphate. The chain is Beta-myrcene synthase, chloroplastic (MYS) from Ocimum basilicum (Sweet basil).